The primary structure comprises 359 residues: Protein RecA (359 aa).

Residue 77-84 coordinates ATP; sequence GPESSGKT.

Belongs to the RecA family.

Its subcellular location is the cytoplasm. Its function is as follows. Can catalyze the hydrolysis of ATP in the presence of single-stranded DNA, the ATP-dependent uptake of single-stranded DNA by duplex DNA, and the ATP-dependent hybridization of homologous single-stranded DNAs. It interacts with LexA causing its activation and leading to its autocatalytic cleavage. The chain is Protein RecA from Azospirillum lipoferum (strain 4B).